The following is a 319-amino-acid chain: Ribonuclease Z (319 aa).

The Zn(2+) site is built by His-62, His-64, Asp-66, His-67, His-145, Asp-216, and His-274. The active-site Proton acceptor is Asp-66.

The protein belongs to the RNase Z family. As to quaternary structure, homodimer. The cofactor is Zn(2+).

It catalyses the reaction Endonucleolytic cleavage of RNA, removing extra 3' nucleotides from tRNA precursor, generating 3' termini of tRNAs. A 3'-hydroxy group is left at the tRNA terminus and a 5'-phosphoryl group is left at the trailer molecule.. Functionally, zinc phosphodiesterase, which displays some tRNA 3'-processing endonuclease activity. Probably involved in tRNA maturation, by removing a 3'-trailer from precursor tRNA. The chain is Ribonuclease Z from Parasynechococcus marenigrum (strain WH8102).